A 577-amino-acid polypeptide reads, in one-letter code: MLFSKLFAPTLKEPPKDAVLKSHKHLAQAGYIYQVGSGIYNFLPLAKKVLDKIENITHKRMQEHGAQNILMSFVVLASLWEKSGRLDKYGKELLVFKDRKDNDFVLSPTLEENITEIAANFIKSYKQLPVHLYQIHTKFRDEIRPRFGLVRAREFIMKDGYSFHEDAESLDKEFLNTQSAYKEILSDLGLDFRIVEADSGAIGGSKSREFVVLTECGEDTIVVCQNCDYAANIEIAKRSKRPEPLNVPKAQLAKFPTPNTTSAQSVAEFFKTEPYFVLKALVKKVIHKDKETLACFFVRGDDNLEETKALNALNIIGANALELREANEEDLNHAGLIAGFIGPYGLKKHVSYIIFDEDLKEGDCLIAGANEKDFHAVGVDLKGFENLVYADIVQIKESDHCPNCQGALKYHKSLEVGHIFKLGQGYAKSLKASFLDKNGKEQFFEMGCYGIGISRLLSAILEQKSDDLGCVWTKNTAPFDVVIVVSNWKDEAQKKLAFEVYERLLQKGVDALLDDRDARFGAKMRDFELIGERLALIVGKQALESKEFECIKRANLEKQTLKDTELEEKILEMLASE.

The protein belongs to the class-II aminoacyl-tRNA synthetase family. ProS type 1 subfamily. As to quaternary structure, homodimer.

It localises to the cytoplasm. The catalysed reaction is tRNA(Pro) + L-proline + ATP = L-prolyl-tRNA(Pro) + AMP + diphosphate. Functionally, catalyzes the attachment of proline to tRNA(Pro) in a two-step reaction: proline is first activated by ATP to form Pro-AMP and then transferred to the acceptor end of tRNA(Pro). As ProRS can inadvertently accommodate and process non-cognate amino acids such as alanine and cysteine, to avoid such errors it has two additional distinct editing activities against alanine. One activity is designated as 'pretransfer' editing and involves the tRNA(Pro)-independent hydrolysis of activated Ala-AMP. The other activity is designated 'posttransfer' editing and involves deacylation of mischarged Ala-tRNA(Pro). The misacylated Cys-tRNA(Pro) is not edited by ProRS. This is Proline--tRNA ligase from Helicobacter pylori (strain G27).